Reading from the N-terminus, the 79-residue chain is Putative defensin-like protein 274 (79 aa).

Positions 1–23 (MASSRFQLVALLVVFSLVISITA) are cleaved as a signal peptide. 4 disulfides stabilise this stretch: cysteine 35–cysteine 76, cysteine 41–cysteine 64, cysteine 47–cysteine 74, and cysteine 51–cysteine 75.

It belongs to the DEFL family.

It is found in the secreted. The sequence is that of Putative defensin-like protein 274 from Arabidopsis thaliana (Mouse-ear cress).